We begin with the raw amino-acid sequence, 258 residues long: Exosome complex component Rrp41 (258 aa).

The protein belongs to the RNase PH family. Rrp41 subfamily. As to quaternary structure, component of the archaeal exosome complex. Forms a hexameric ring-like arrangement composed of 3 Rrp41-Rrp42 heterodimers. The hexameric ring associates with a trimer of Rrp4 and/or Csl4 subunits.

It localises to the cytoplasm. Functionally, catalytic component of the exosome, which is a complex involved in RNA degradation. Has 3'-&gt;5' exoribonuclease activity. Can also synthesize heteromeric RNA-tails. In Archaeoglobus fulgidus (strain ATCC 49558 / DSM 4304 / JCM 9628 / NBRC 100126 / VC-16), this protein is Exosome complex component Rrp41.